The primary structure comprises 93 residues: Large ribosomal subunit protein uL23 (93 aa).

This sequence belongs to the universal ribosomal protein uL23 family. As to quaternary structure, part of the 50S ribosomal subunit. Contacts protein L29, and trigger factor when it is bound to the ribosome.

In terms of biological role, one of the early assembly proteins it binds 23S rRNA. One of the proteins that surrounds the polypeptide exit tunnel on the outside of the ribosome. Forms the main docking site for trigger factor binding to the ribosome. This Natranaerobius thermophilus (strain ATCC BAA-1301 / DSM 18059 / JW/NM-WN-LF) protein is Large ribosomal subunit protein uL23.